A 785-amino-acid polypeptide reads, in one-letter code: MAAAPPAAVSEPTAARQKLLALLGQVQTYVFQLELLRRCDPQIGLGKLAQLKLNALQVRVLRRHLRPGLEAQAAAFLTPLSVTLELLLEYAWREGERLLGHLETFATTGDVSAFFTETMGLARPCPYHQQIRLQTYGGDVRMELCFLHDVENFLKQLNYCHLITPPSGATAALERVREFMVAAVGSGLIVPPELSDPSHPCAVCFEELCVTANQGATIARRLADRICNHVTQQAQVRLDANELRRYLPHAAGLSDAARARALCVLDQALARTAAGGGARAGPPPADSSSVREEADALLEAHDVFQATTPGLYAISELRFWLASGDRARHSTMDAFADNLNALAQRELQQETAAVAVELALFGRRAEHFDRAFGGHLAALDMVDALIIGGQATSPDDQIEALIRACYDHHLTTPLLRRLVSPEQCDEEALRRVLARLGAGGATGGAEEEEPRAAAEEGGRRRGAGTPASEDGERGPEPGAQGPESWGDIATRAAADVRERRRLYADRLTKRSLASLGRCVREQRGELEKMLRVSVHGEVLPATFAAVANGFAARARFCALTAGAGTVIDNRAAPGVFDAHRFMRASLLRHQVDPALLPSITHRFFELVNGPLFDHSTHSFAQPPNTALYYSVENVGLLPHLKEELARFIMGAGGSGADWAVSEFQKFYCFDGVSGITPTQRAAWRYIRELIIATTLFASVYRCGELELRRPDCSRPTSEGLYRYPPGVYLTYNSDCPLVAIVESGPDGCIGPRSVVVYDRDVFSILYSVLQHLAPRLAGGGSDAPP.

A C3H1-type zinc finger spans residues 201 to 229; that stretch reads CAVCFEELCVTANQGATIARRLADRICNH. Positions 439 to 487 are disordered; that stretch reads GGATGGAEEEEPRAAAEEGGRRRGAGTPASEDGERGPEPGAQGPESWGD. Basic and acidic residues predominate over residues 450 to 459; that stretch reads PRAAAEEGGR. 696 to 703 contributes to the ATP binding site; that stretch reads FASVYRCG.

Belongs to the herpesviridae TRM1 protein family. Associates with TRM2 and TRM3 to form the tripartite terminase complex. Interacts with portal protein.

The protein resides in the host nucleus. Component of the molecular motor that translocates viral genomic DNA in empty capsid during DNA packaging. Forms a tripartite terminase complex together with TRM2 and TRM3 in the host cytoplasm. Once the complex reaches the host nucleus, it interacts with the capsid portal vertex. This portal forms a ring in which genomic DNA is translocated into the capsid. TRM1 carries an endonuclease activity that plays an important role for the cleavage of concatemeric viral DNA into unit length genomes. The protein is Tripartite terminase subunit 1 of Human herpesvirus 2 (strain HG52) (HHV-2).